A 208-amino-acid polypeptide reads, in one-letter code: Putative vomeronasal receptor-like protein 4 (208 aa).

Residues 1 to 19 (MEMTKLFSYIVIKNVYYPQ) are Extracellular-facing. Residues 20–40 (VSFGISANTFLLLFHIFTFAY) form a helical membrane-spanning segment. Topologically, residues 41 to 48 (THRLKPID) are cytoplasmic. The chain crosses the membrane as a helical span at residues 49-69 (MTISHLPLIHILLLFTQAILV). At 70-97 (SSDLFESWNIQNNDLKCKIITFLNRVMR) the chain is on the extracellular side. An intrachain disulfide couples cysteine 86 to cysteine 173. The chain crosses the membrane as a helical span at residues 98-118 (GVSICTTCLLSVLQAITISPS). Residues 119–135 (TSFLEKFKHISANHTLG) lie on the Cytoplasmic side of the membrane. The chain crosses the membrane as a helical span at residues 136–156 (FILFSWVLNMFITNNLLLFIV). Topologically, residues 157 to 183 (PTPNRIGASLLFVTEHCYVLPMSYTHR) are extracellular. Residues 184 to 204 (SLFFILMVLRDVIFIGLMVLS) traverse the membrane as a helical segment. The Cytoplasmic segment spans residues 205–208 (SGYG).

The protein belongs to the G-protein coupled receptor 1 family. In terms of tissue distribution, expressed in olfactory nerve.

The protein localises to the cell membrane. Functionally, putative pheromone receptor. This chain is Putative vomeronasal receptor-like protein 4 (VN1R17P), found in Homo sapiens (Human).